A 217-amino-acid polypeptide reads, in one-letter code: Phosphatidylserine decarboxylase proenzyme (217 aa).

Ser182 acts as the Schiff-base intermediate with substrate; via pyruvic acid in catalysis. Ser182 carries the pyruvic acid (Ser); by autocatalysis modification.

Belongs to the phosphatidylserine decarboxylase family. PSD-A subfamily. Heterodimer of a large membrane-associated beta subunit and a small pyruvoyl-containing alpha subunit. Pyruvate serves as cofactor. In terms of processing, is synthesized initially as an inactive proenzyme. Formation of the active enzyme involves a self-maturation process in which the active site pyruvoyl group is generated from an internal serine residue via an autocatalytic post-translational modification. Two non-identical subunits are generated from the proenzyme in this reaction, and the pyruvate is formed at the N-terminus of the alpha chain, which is derived from the carboxyl end of the proenzyme. The post-translation cleavage follows an unusual pathway, termed non-hydrolytic serinolysis, in which the side chain hydroxyl group of the serine supplies its oxygen atom to form the C-terminus of the beta chain, while the remainder of the serine residue undergoes an oxidative deamination to produce ammonia and the pyruvoyl prosthetic group on the alpha chain.

It is found in the cell membrane. The enzyme catalyses a 1,2-diacyl-sn-glycero-3-phospho-L-serine + H(+) = a 1,2-diacyl-sn-glycero-3-phosphoethanolamine + CO2. It participates in phospholipid metabolism; phosphatidylethanolamine biosynthesis; phosphatidylethanolamine from CDP-diacylglycerol: step 2/2. Functionally, catalyzes the formation of phosphatidylethanolamine (PtdEtn) from phosphatidylserine (PtdSer). The sequence is that of Phosphatidylserine decarboxylase proenzyme from Nitratidesulfovibrio vulgaris (strain ATCC 29579 / DSM 644 / CCUG 34227 / NCIMB 8303 / VKM B-1760 / Hildenborough) (Desulfovibrio vulgaris).